Consider the following 942-residue polypeptide: Homeobox protein 2 (942 aa).

Low complexity-rich tracts occupy residues 32-87 (ECNE…NINE) and 98-130 (SPYSSPSSSISSPSRSPSPNSPASSSPIHSPIP). Disordered stretches follow at residues 32–149 (ECNE…PQNI), 161–494 (LESP…RLKK), 537–580 (RQEK…QGGA), and 609–942 (FKNN…CQQN). The span at 131 to 149 (NTNFKQSGEYQSIPSPQNI) shows a compositional bias: polar residues. Positions 163 to 261 (SPNSSNSSPS…PSSNLSKSNS (99 aa)) are enriched in low complexity. The segment covering 269-290 (QAPSNTSSPQLLSPNHNQQRIS) has biased composition (polar residues). Composition is skewed to low complexity over residues 299–430 (NNNH…NSSP) and 450–464 (NNNNNNNNNNNSNSS). Over residues 465 to 481 (FDEYQPQQKVSRSNSPN) the composition is skewed to polar residues. Positions 485–544 (EKKRRTRLKKEQADILKTFFDNDDYPTKDDKETLANRLGMSYCAVTTWFSNKRQEKKRRG) form a DNA-binding region, homeobox. Composition is skewed to low complexity over residues 609-621 (FKNNNMDNNNKNV), 628-685 (NNNN…GSSD), 694-737 (NNNN…NNNN), 752-764 (NNNNNNNNNNNNN), 776-864 (SDDT…YLNN), and 890-927 (NNFNGDNNNNNNNKNNNNNNQNNNGNGNNNNNNNNDNN). Positions 835–865 (NNNNNNNNQNNNNNNNNNQYNNNNKNYLNNI) form a coiled coil.

Its subcellular location is the nucleus. In terms of biological role, putative transcription factor that may potentiate the function of warA. This Dictyostelium discoideum (Social amoeba) protein is Homeobox protein 2 (hbx2).